We begin with the raw amino-acid sequence, 424 residues long: Myb family transcription factor RLI1 (424 aa).

The disordered stretch occupies residues 144 to 165 (RPQKRDSGERTPLPPPSQQQHQ). The HTH myb-type domain occupies 238–298 (APSKTRIRWT…HLQKYRIAKY (61 aa)). Positions 269–294 (PKGILKLMNSDGLTIYHIKSHLQKYR) form a DNA-binding region, H-T-H motif. Positions 342-347 (LHEQLE) match the LHEQLE motif. Residues 342-391 (LHEQLEIQRNLQLRIEEQGKRLQKMFEDQLKASRSVMEPQELDDVVAFAA) adopt a coiled-coil conformation.

The protein belongs to the MYB-CC family. In terms of assembly, homodimer. Interacts with PHR2 in the nucleus. Interacts with SPX1 and SPX2 in the nucleus; these interactions prevent binding to the promoters of target genes, thus regulating negatively leaf inclination in response to phosphate (Pi) starvation.

The protein localises to the nucleus. Functionally, transcription factor binding to specific DNA sequences of target genes promoters, such as the motif R1BS 5'-NAKATNCN-3' and the motif P1BS 5'-GNATATNC-3' to trigger their expression. Nitrate-induced component involved in modulating phosphate (Pi) response and homeostasis together with PHR2; activates directly the expression of Pi starvation-induced (PSI) genes upon nitrate disponibility, thus triggering the nitrate-induced phosphate response (NIPR) promoting Pi uptake activity. Involved in the shoot architecture; positively regulates leaf inclination by affecting lamina joint cell elongation via the direct promotion of ILI4/BU1 and BC1 genes expression, especially in response to phosphate (Pi) availability. Regulates both brassinolide (BL) biosynthesis and signaling by directly activating BL-biosynthesis and signaling genes. This chain is Myb family transcription factor RLI1, found in Oryza sativa subsp. indica (Rice).